A 183-amino-acid chain; its full sequence is Gamma-crystallin N-A (183 aa).

Beta/gamma crystallin 'Greek key' domains follow at residues 6–46 (GKIV…RVES), 47–89 (GAWV…KPIK), 95–136 (YRME…KVYG), and 138–180 (GAWA…RRVV).

This sequence belongs to the beta/gamma-crystallin family. Monomer.

Functionally, crystallins are the dominant structural components of the vertebrate eye lens. The chain is Gamma-crystallin N-A (crygna) from Danio rerio (Zebrafish).